A 254-amino-acid polypeptide reads, in one-letter code: 4-hydroxy-tetrahydrodipicolinate reductase (254 aa).

7–12 lines the NAD(+) pocket; that stretch reads GASGRI. Arginine 35 is an NADP(+) binding site. NAD(+) contacts are provided by residues 91–93 and 115–118; these read GTT and AHNM. Histidine 147 serves as the catalytic Proton donor/acceptor. Histidine 148 serves as a coordination point for (S)-2,3,4,5-tetrahydrodipicolinate. The active-site Proton donor is the lysine 151. Position 157–158 (157–158) interacts with (S)-2,3,4,5-tetrahydrodipicolinate; that stretch reads GT.

It belongs to the DapB family.

The protein localises to the cytoplasm. The enzyme catalyses (S)-2,3,4,5-tetrahydrodipicolinate + NAD(+) + H2O = (2S,4S)-4-hydroxy-2,3,4,5-tetrahydrodipicolinate + NADH + H(+). It carries out the reaction (S)-2,3,4,5-tetrahydrodipicolinate + NADP(+) + H2O = (2S,4S)-4-hydroxy-2,3,4,5-tetrahydrodipicolinate + NADPH + H(+). Its pathway is amino-acid biosynthesis; L-lysine biosynthesis via DAP pathway; (S)-tetrahydrodipicolinate from L-aspartate: step 4/4. Catalyzes the conversion of 4-hydroxy-tetrahydrodipicolinate (HTPA) to tetrahydrodipicolinate. The sequence is that of 4-hydroxy-tetrahydrodipicolinate reductase from Helicobacter acinonychis (strain Sheeba).